Consider the following 488-residue polypeptide: Cysteine--tRNA ligase (488 aa).

Cys-28 contacts Zn(2+). A 'HIGH' region motif is present at residues 30–40; the sequence is PTVYDDAHLGH. Positions 209, 239, and 243 each coordinate Zn(2+). A 'KMSKS' region motif is present at residues 271–275; sequence KMSKS. Lys-274 contributes to the ATP binding site.

Belongs to the class-I aminoacyl-tRNA synthetase family. In terms of assembly, monomer. The cofactor is Zn(2+).

The protein resides in the cytoplasm. The enzyme catalyses tRNA(Cys) + L-cysteine + ATP = L-cysteinyl-tRNA(Cys) + AMP + diphosphate. The protein is Cysteine--tRNA ligase of Helicobacter hepaticus (strain ATCC 51449 / 3B1).